The sequence spans 185 residues: MNQYNVKYLAKILCIKTEIARDPYAVINRNVLLRYTTDIQYNDLVTLITVRHKIDSMKTVFQVFNESSINYTPVDDDYGEPIIITSYLQKGHNKFPVNFLYIDVVISDLFPSFVRLNTTETNIVNSVLQTGDGKKTLRLPKMLETEIVVKILYRPNIPLKIVRFFRNNMITGVEIADRSVISVAD.

This sequence belongs to the poxviridae DNA-directed RNA polymerase 22 kDa subunit family. The DNA-dependent RNA polymerase used for intermediate and late genes expression consists of eight subunits Rpo30/OPG66, Rpo7/OPG90, Rpo22/OPG103, Rpo147/OPG105, Rpo18/OPG119, Rpo19/OPG131, Rpo132/OPG151 and Rpo35/OPG156. The same holoenzyme, with the addition of the transcription-specificity factor OPG109, is used for early gene expression.

The protein localises to the virion. The catalysed reaction is RNA(n) + a ribonucleoside 5'-triphosphate = RNA(n+1) + diphosphate. Functionally, part of the DNA-dependent RNA polymerase which catalyzes the transcription of viral DNA into RNA using the four ribonucleoside triphosphates as substrates. Responsible for the transcription of early, intermediate and late genes. DNA-dependent RNA polymerase associates with the early transcription factor (ETF), itself composed of OPG118 and OPG133, thereby allowing the early genes transcription. Late transcription, and probably also intermediate transcription, require newly synthesized RNA polymerase. The protein is DNA-directed RNA polymerase 22 kDa subunit (OPG103) of Variola virus (isolate Human/India/Ind3/1967) (VARV).